An 801-amino-acid polypeptide reads, in one-letter code: Phenylalanine--tRNA ligase beta subunit (801 aa).

In terms of domain architecture, tRNA-binding spans 39–147 (GGGLDEVVVA…TDLPLGVPVF (109 aa)). Residues 401–477 (LPRRTVRFRV…RLNGYNNIPV (77 aa)) form the B5 domain. Positions 455, 461, 464, and 465 each coordinate Mg(2+). One can recognise an FDX-ACB domain in the interval 708-801 (SRFPDTFRDI…LVKKLAVTIR (94 aa)).

The protein belongs to the phenylalanyl-tRNA synthetase beta subunit family. Type 1 subfamily. As to quaternary structure, tetramer of two alpha and two beta subunits. It depends on Mg(2+) as a cofactor.

The protein localises to the cytoplasm. The catalysed reaction is tRNA(Phe) + L-phenylalanine + ATP = L-phenylalanyl-tRNA(Phe) + AMP + diphosphate + H(+). The sequence is that of Phenylalanine--tRNA ligase beta subunit from Geobacter metallireducens (strain ATCC 53774 / DSM 7210 / GS-15).